The primary structure comprises 287 residues: Phosphatidylserine decarboxylase proenzyme (287 aa).

Active-site charge relay system; for autoendoproteolytic cleavage activity residues include Asp-86, His-143, and Ser-250. Catalysis depends on Ser-250, which acts as the Schiff-base intermediate with substrate; via pyruvic acid; for decarboxylase activity. Ser-250 bears the Pyruvic acid (Ser); by autocatalysis mark.

This sequence belongs to the phosphatidylserine decarboxylase family. PSD-B subfamily. Prokaryotic type I sub-subfamily. As to quaternary structure, heterodimer of a large membrane-associated beta subunit and a small pyruvoyl-containing alpha subunit. Pyruvate is required as a cofactor. In terms of processing, is synthesized initially as an inactive proenzyme. Formation of the active enzyme involves a self-maturation process in which the active site pyruvoyl group is generated from an internal serine residue via an autocatalytic post-translational modification. Two non-identical subunits are generated from the proenzyme in this reaction, and the pyruvate is formed at the N-terminus of the alpha chain, which is derived from the carboxyl end of the proenzyme. The autoendoproteolytic cleavage occurs by a canonical serine protease mechanism, in which the side chain hydroxyl group of the serine supplies its oxygen atom to form the C-terminus of the beta chain, while the remainder of the serine residue undergoes an oxidative deamination to produce ammonia and the pyruvoyl prosthetic group on the alpha chain. During this reaction, the Ser that is part of the protease active site of the proenzyme becomes the pyruvoyl prosthetic group, which constitutes an essential element of the active site of the mature decarboxylase.

The protein resides in the cell membrane. The catalysed reaction is a 1,2-diacyl-sn-glycero-3-phospho-L-serine + H(+) = a 1,2-diacyl-sn-glycero-3-phosphoethanolamine + CO2. Its pathway is phospholipid metabolism; phosphatidylethanolamine biosynthesis; phosphatidylethanolamine from CDP-diacylglycerol: step 2/2. Catalyzes the formation of phosphatidylethanolamine (PtdEtn) from phosphatidylserine (PtdSer). The sequence is that of Phosphatidylserine decarboxylase proenzyme from Wigglesworthia glossinidia brevipalpis.